The following is a 342-amino-acid chain: Probable receptor-like protein kinase At4g10390 (342 aa).

Residues 41 to 336 (SNFSRLIGSG…IKEIPSLSFL (296 aa)) enclose the Protein kinase domain. Residues 47 to 55 (IGSGGYSSI) and Lys-69 contribute to the ATP site. Residue Asp-165 is the Proton acceptor of the active site. Residues Ser-169 and Ser-201 each carry the phosphoserine modification. A Phosphotyrosine modification is found at Tyr-220.

The protein belongs to the protein kinase superfamily. Ser/Thr protein kinase family.

The enzyme catalyses L-seryl-[protein] + ATP = O-phospho-L-seryl-[protein] + ADP + H(+). It carries out the reaction L-threonyl-[protein] + ATP = O-phospho-L-threonyl-[protein] + ADP + H(+). This chain is Probable receptor-like protein kinase At4g10390, found in Arabidopsis thaliana (Mouse-ear cress).